Consider the following 389-residue polypeptide: NAD-dependent protein deacetylase sirtuin-2 (389 aa).

Residues 1-34 form a disordered region; it reads MAEPDPSHPLETQAGKVQEAQDSDSDSEGGAAGG. Alanine 2 is modified (N-acetylalanine). Residues serine 23, serine 25, and serine 27 each carry the phosphoserine modification. The short motif at 41 to 51 is the Nuclear export signal element; that stretch reads LRNLFSQTLSL. Position 53 is a phosphoserine (serine 53). A Deacetylase sirtuin-type domain is found at 57-338; the sequence is RLLDELTLEG…LALAELLGWK (282 aa). Residues 85 to 89 and 95 to 97 contribute to the NAD(+) site; these read AGIST and DFR. Position 100 is a phosphoserine (serine 100). 167–170 provides a ligand contact to NAD(+); the sequence is QNID. Residue histidine 187 is the Proton acceptor of the active site. Positions 195 and 200 each coordinate Zn(2+). Serine 207 is modified (phosphoserine). Residues cysteine 221 and cysteine 224 each coordinate Zn(2+). NAD(+) contacts are provided by residues 262–263, 286–288, and cysteine 324; these read TS and NKE. Residues 351–389 form a disordered region; it reads SIDAQSGAGVPNPSTSASPKKSPPPAKDEARTTEREKPQ. Over residues 361–370 the composition is skewed to low complexity; it reads PNPSTSASPK. Serine 368 carries the phosphoserine; by CDK2 and CDK5 modification. Phosphoserine is present on serine 372. Over residues 376-389 the composition is skewed to basic and acidic residues; sequence AKDEARTTEREKPQ.

It belongs to the sirtuin family. Class I subfamily. As to quaternary structure, interacts with CDC20, FOXO3 and FZR1. Associates with microtubules in primary cortical mature neurons. Homotrimer. Isoform 1 and isoform 2 interact (via both phosphorylated, unphosphorylated, active or inactive forms) with HDAC6; the interaction is necessary for the complex to interact with alpha-tubulin, suggesting that these proteins belong to a large complex that deacetylates the cytoskeleton. Interacts with FOXO1; the interaction is disrupted upon serum-starvation or oxidative stress, leading to increased level of acetylated FOXO1 and induction of autophagy. Interacts with RELA; the interaction occurs in the cytoplasm and is increased in a TNF-alpha-dependent manner. Interacts with HOXA10; the interaction is direct. Interacts with YWHAB and YWHAG; the interactions occur in a AKT-dependent manner and increase SIRT2-dependent TP53 deacetylation. Interacts with MAPK1/ERK2 and MAPK3/ERK1; the interactions increase SIRT2 stability and deacetylation activity. Interacts (phosphorylated form) with KMT5A isoform 2; the interaction is direct, stimulates KMT5A-mediated methyltransferase activity on histone at 'Lys-20' (H4K20me1) and is increased in a H(2)O(2)-induced oxidative stress-dependent manner. Interacts with G6PD; the interaction is enhanced by H(2)O(2) treatment. Interacts with a G1/S-specific cyclin E-CDK2 complex. Interacts with AURKA, CDK5R1 (p35 form) and CDK5 and HIF1A. Isoform 1, isoform 2 and isoform 5 interact (via C-terminus region) with EP300. Interacts with the tRNA ligase SARS1; recruited to the VEGFA promoter via interaction with SARS1. Interacts with BEX4; negatively regulates alpha-tubulin deacetylation by SIRT2. It depends on Zn(2+) as a cofactor. Phosphorylated at phosphoserine and phosphothreonine. Phosphorylated at Ser-368 by a mitotic kinase CDK1/cyclin B at the G2/M transition; phosphorylation regulates the delay in cell-cycle progression. Phosphorylated at Ser-368 by a mitotic kinase G1/S-specific cyclin E/Cdk2 complex; phosphorylation inactivates SIRT2-mediated alpha-tubulin deacetylation and thereby negatively regulates cell adhesion, cell migration and neurite outgrowth during neuronal differentiation. Phosphorylated by cyclin A/Cdk2 and p35-Cdk5 complexes and to a lesser extent by the cyclin D3/Cdk4 and cyclin B/Cdk1, in vitro. Dephosphorylated at Ser-368 by CDC14A and CDC14B around early anaphase. Post-translationally, acetylated by EP300; acetylation leads both to the decreased of SIRT2-mediated alpha-tubulin deacetylase activity and SIRT2-mediated down-regulation of TP53 transcriptional activity. In terms of processing, ubiquitinated. In terms of tissue distribution, isoform 1 is expressed in heart, liver and skeletal muscle, weakly expressed in the cortex. Isoform 2 is strongly expressed in the cortex, weakly expressed in heart and liver. Weakly expressed in several malignancies including breast, liver, brain, kidney and prostate cancers compared to normal tissues. Weakly expressed in glioma cell lines compared to normal brain tissues (at protein level). Widely expressed. Highly expressed in heart, brain and skeletal muscle, while it is weakly expressed in placenta and lung. Down-regulated in many gliomas suggesting that it may act as a tumor suppressor gene in human gliomas possibly through the regulation of microtubule network.

It localises to the nucleus. The protein resides in the cytoplasm. Its subcellular location is the perinuclear region. It is found in the cytoskeleton. The protein localises to the microtubule organizing center. It localises to the centrosome. The protein resides in the centriole. Its subcellular location is the spindle. It is found in the midbody. The protein localises to the chromosome. It localises to the perikaryon. The protein resides in the cell projection. Its subcellular location is the growth cone. It is found in the myelin membrane. It catalyses the reaction N(6)-acetyl-L-lysyl-[protein] + NAD(+) + H2O = 2''-O-acetyl-ADP-D-ribose + nicotinamide + L-lysyl-[protein]. The catalysed reaction is N(6)-tetradecanoyl-L-lysyl-[protein] + NAD(+) + H2O = 2''-O-tetradecanoyl-ADP-D-ribose + nicotinamide + L-lysyl-[protein]. The enzyme catalyses N(6)-hexadecanoyl-L-lysyl-[protein] + NAD(+) + H2O = 2''-O-hexadecanoyl-ADP-D-ribose + nicotinamide + L-lysyl-[protein]. With respect to regulation, inhibited by Sirtinol, A3 and M15 small molecules. Inhibited by nicotinamide. Inhibited by a macrocyclic peptide inhibitor S2iL5. Inhibited by EP300-induced acetylation. NAD-dependent protein deacetylase, which deacetylates internal lysines on histone and alpha-tubulin as well as many other proteins such as key transcription factors. Participates in the modulation of multiple and diverse biological processes such as cell cycle control, genomic integrity, microtubule dynamics, cell differentiation, metabolic networks, and autophagy. Plays a major role in the control of cell cycle progression and genomic stability. Functions in the antephase checkpoint preventing precocious mitotic entry in response to microtubule stress agents, and hence allowing proper inheritance of chromosomes. Positively regulates the anaphase promoting complex/cyclosome (APC/C) ubiquitin ligase complex activity by deacetylating CDC20 and FZR1, then allowing progression through mitosis. Associates both with chromatin at transcriptional start sites (TSSs) and enhancers of active genes. Plays a role in cell cycle and chromatin compaction through epigenetic modulation of the regulation of histone H4 'Lys-20' methylation (H4K20me1) during early mitosis. Specifically deacetylates histone H4 at 'Lys-16' (H4K16ac) between the G2/M transition and metaphase enabling H4K20me1 deposition by KMT5A leading to ulterior levels of H4K20me2 and H4K20me3 deposition throughout cell cycle, and mitotic S-phase progression. Deacetylates KMT5A modulating KMT5A chromatin localization during the mitotic stress response. Also deacetylates histone H3 at 'Lys-57' (H3K56ac) during the mitotic G2/M transition. Upon bacterium Listeria monocytogenes infection, deacetylates 'Lys-18' of histone H3 in a receptor tyrosine kinase MET- and PI3K/Akt-dependent manner, thereby inhibiting transcriptional activity and promoting late stages of listeria infection. During oocyte meiosis progression, may deacetylate histone H4 at 'Lys-16' (H4K16ac) and alpha-tubulin, regulating spindle assembly and chromosome alignment by influencing microtubule dynamics and kinetochore function. Deacetylates histone H4 at 'Lys-16' (H4K16ac) at the VEGFA promoter and thereby contributes to regulate expression of VEGFA, a key regulator of angiogenesis. Deacetylates alpha-tubulin at 'Lys-40' and hence controls neuronal motility, oligodendroglial cell arbor projection processes and proliferation of non-neuronal cells. Phosphorylation at Ser-368 by a G1/S-specific cyclin E-CDK2 complex inactivates SIRT2-mediated alpha-tubulin deacetylation, negatively regulating cell adhesion, cell migration and neurite outgrowth during neuronal differentiation. Deacetylates PARD3 and participates in the regulation of Schwann cell peripheral myelination formation during early postnatal development and during postinjury remyelination. Involved in several cellular metabolic pathways. Plays a role in the regulation of blood glucose homeostasis by deacetylating and stabilizing phosphoenolpyruvate carboxykinase PCK1 activity in response to low nutrient availability. Acts as a key regulator in the pentose phosphate pathway (PPP) by deacetylating and activating the glucose-6-phosphate G6PD enzyme, and therefore, stimulates the production of cytosolic NADPH to counteract oxidative damage. Maintains energy homeostasis in response to nutrient deprivation as well as energy expenditure by inhibiting adipogenesis and promoting lipolysis. Attenuates adipocyte differentiation by deacetylating and promoting FOXO1 interaction to PPARG and subsequent repression of PPARG-dependent transcriptional activity. Plays a role in the regulation of lysosome-mediated degradation of protein aggregates by autophagy in neuronal cells. Deacetylates FOXO1 in response to oxidative stress or serum deprivation, thereby negatively regulating FOXO1-mediated autophagy. Deacetylates a broad range of transcription factors and co-regulators regulating target gene expression. Deacetylates transcriptional factor FOXO3 stimulating the ubiquitin ligase SCF(SKP2)-mediated FOXO3 ubiquitination and degradation. Deacetylates HIF1A and therefore promotes HIF1A degradation and inhibition of HIF1A transcriptional activity in tumor cells in response to hypoxia. Deacetylates RELA in the cytoplasm inhibiting NF-kappaB-dependent transcription activation upon TNF-alpha stimulation. Inhibits transcriptional activation by deacetylating p53/TP53 and EP300. Also deacetylates EIF5A. Functions as a negative regulator on oxidative stress-tolerance in response to anoxia-reoxygenation conditions. Plays a role as tumor suppressor. In addition to protein deacetylase activity, also has activity toward long-chain fatty acyl groups and mediates protein-lysine demyristoylation and depalmitoylation of target proteins, such as ARF6 and KRAS, thereby regulating their association with membranes. In terms of biological role, deacetylates EP300, alpha-tubulin and histone H3 and H4. Its function is as follows. Lacks deacetylation activity, at least toward known SIRT2 targets. The polypeptide is NAD-dependent protein deacetylase sirtuin-2 (SIRT2) (Homo sapiens (Human)).